The chain runs to 263 residues: Exosome complex component Rrp4 (263 aa).

The region spanning 51-127 (GKYIPSRKDF…KAMKVELSMR (77 aa)) is the S1 motif domain. Residues 135–196 (SKGRIIEVVP…DRLTTAIEMI (62 aa)) form the KH domain. The segment at 213–263 (LRGEPEGTEGSDEEQLVDEEVAGVSLEDDDVTEETSRKVDVLLDNDTDETN) is disordered. The segment covering 218–245 (EGTEGSDEEQLVDEEVAGVSLEDDDVTE) has biased composition (acidic residues).

This sequence belongs to the RRP4 family. As to quaternary structure, component of the archaeal exosome complex. Forms a trimer of Rrp4 and/or Csl4 subunits. The trimer associates with a hexameric ring-like arrangement composed of 3 Rrp41-Rrp42 heterodimers.

The protein resides in the cytoplasm. Its function is as follows. Non-catalytic component of the exosome, which is a complex involved in RNA degradation. Increases the RNA binding and the efficiency of RNA degradation. Confers strong poly(A) specificity to the exosome. The sequence is that of Exosome complex component Rrp4 from Methanococcoides burtonii (strain DSM 6242 / NBRC 107633 / OCM 468 / ACE-M).